The following is a 199-amino-acid chain: Cytochrome c oxidase subunit 2 (199 aa).

A helical transmembrane segment spans residues 1–13 (AICSLVLYLLTLM). The Mitochondrial matrix segment spans residues 14–26 (LMEKLSSNTVDAQ). A helical membrane pass occupies residues 27–54 (EVELIWTILPAIVLILLALPSLQILYMM). The Mitochondrial intermembrane portion of the chain corresponds to 55-199 (DEIDEPDLTL…SSLLSASSSL (145 aa)). Residues His128, Cys163, Glu165, Cys167, His171, and Met174 each contribute to the Cu cation site. Glu165 is a binding site for Mg(2+).

It belongs to the cytochrome c oxidase subunit 2 family. Component of the cytochrome c oxidase (complex IV, CIV), a multisubunit enzyme composed of 14 subunits. The complex is composed of a catalytic core of 3 subunits MT-CO1, MT-CO2 and MT-CO3, encoded in the mitochondrial DNA, and 11 supernumerary subunits COX4I, COX5A, COX5B, COX6A, COX6B, COX6C, COX7A, COX7B, COX7C, COX8 and NDUFA4, which are encoded in the nuclear genome. The complex exists as a monomer or a dimer and forms supercomplexes (SCs) in the inner mitochondrial membrane with NADH-ubiquinone oxidoreductase (complex I, CI) and ubiquinol-cytochrome c oxidoreductase (cytochrome b-c1 complex, complex III, CIII), resulting in different assemblies (supercomplex SCI(1)III(2)IV(1) and megacomplex MCI(2)III(2)IV(2)). Found in a complex with TMEM177, COA6, COX18, COX20, SCO1 and SCO2. Interacts with TMEM177 in a COX20-dependent manner. Interacts with COX20. Interacts with COX16. The cofactor is Cu cation.

The protein localises to the mitochondrion inner membrane. The catalysed reaction is 4 Fe(II)-[cytochrome c] + O2 + 8 H(+)(in) = 4 Fe(III)-[cytochrome c] + 2 H2O + 4 H(+)(out). In terms of biological role, component of the cytochrome c oxidase, the last enzyme in the mitochondrial electron transport chain which drives oxidative phosphorylation. The respiratory chain contains 3 multisubunit complexes succinate dehydrogenase (complex II, CII), ubiquinol-cytochrome c oxidoreductase (cytochrome b-c1 complex, complex III, CIII) and cytochrome c oxidase (complex IV, CIV), that cooperate to transfer electrons derived from NADH and succinate to molecular oxygen, creating an electrochemical gradient over the inner membrane that drives transmembrane transport and the ATP synthase. Cytochrome c oxidase is the component of the respiratory chain that catalyzes the reduction of oxygen to water. Electrons originating from reduced cytochrome c in the intermembrane space (IMS) are transferred via the dinuclear copper A center (CU(A)) of subunit 2 and heme A of subunit 1 to the active site in subunit 1, a binuclear center (BNC) formed by heme A3 and copper B (CU(B)). The BNC reduces molecular oxygen to 2 water molecules using 4 electrons from cytochrome c in the IMS and 4 protons from the mitochondrial matrix. This chain is Cytochrome c oxidase subunit 2 (MT-CO2), found in Dromaius novaehollandiae (Emu).